The primary structure comprises 154 residues: Myoglobin (154 aa).

The region spanning 2–148 is the Globin domain; the sequence is GLSDGEWQLV…FRNDIAAKYK (147 aa). Ser4 is subject to Phosphoserine. Residue His65 participates in nitrite binding. His65 is a binding site for O2. Thr68 bears the Phosphothreonine mark. His94 provides a ligand contact to heme b.

It belongs to the globin family. As to quaternary structure, monomeric.

It is found in the cytoplasm. The protein resides in the sarcoplasm. It carries out the reaction Fe(III)-heme b-[protein] + nitric oxide + H2O = Fe(II)-heme b-[protein] + nitrite + 2 H(+). It catalyses the reaction H2O2 + AH2 = A + 2 H2O. Its function is as follows. Monomeric heme protein which primary function is to store oxygen and facilitate its diffusion within muscle tissues. Reversibly binds oxygen through a pentacoordinated heme iron and enables its timely and efficient release as needed during periods of heightened demand. Depending on the oxidative conditions of tissues and cells, and in addition to its ability to bind oxygen, it also has a nitrite reductase activity whereby it regulates the production of bioactive nitric oxide. Under stress conditions, like hypoxia and anoxia, it also protects cells against reactive oxygen species thanks to its pseudoperoxidase activity. The protein is Myoglobin (MB) of Proechimys guairae (Guaira spiny rat).